We begin with the raw amino-acid sequence, 569 residues long: Urease subunit alpha (569 aa).

Positions 131–569 (GGIDTHIHFI…LPLAQRYLLL (439 aa)) constitute a Urease domain. Ni(2+) contacts are provided by His-136, His-138, and Lys-219. The residue at position 219 (Lys-219) is an N6-carboxylysine. Residue His-221 participates in substrate binding. Residues His-248 and His-274 each contribute to the Ni(2+) site. Residue His-322 is the Proton donor of the active site. Asp-362 lines the Ni(2+) pocket.

The protein belongs to the metallo-dependent hydrolases superfamily. Urease alpha subunit family. As to quaternary structure, heterotrimer of UreA (gamma), UreB (beta) and UreC (alpha) subunits. Three heterotrimers associate to form the active enzyme. Ni cation serves as cofactor. In terms of processing, carboxylation allows a single lysine to coordinate two nickel ions.

It localises to the cytoplasm. The enzyme catalyses urea + 2 H2O + H(+) = hydrogencarbonate + 2 NH4(+). The protein operates within nitrogen metabolism; urea degradation; CO(2) and NH(3) from urea (urease route): step 1/1. This chain is Urease subunit alpha, found in Synechococcus sp. (strain CC9311).